The sequence spans 241 residues: Spheroidene monooxygenase (241 aa).

The protein belongs to the CrtA family. The cofactor is heme.

It catalyses the reaction spheroidene + 4 reduced [2Fe-2S]-[ferredoxin] + 2 O2 + 4 H(+) = spheroiden-2-one + 4 oxidized [2Fe-2S]-[ferredoxin] + 3 H2O. It carries out the reaction spirilloxanthin + 4 reduced [2Fe-2S]-[ferredoxin] + 2 O2 + 4 H(+) = 2-oxospirilloxanthin + 4 oxidized [2Fe-2S]-[ferredoxin] + 3 H2O. The enzyme catalyses 2-oxospirilloxanthin + 4 reduced [2Fe-2S]-[ferredoxin] + 2 O2 + 4 H(+) = 2,2'-dioxospirilloxanthin + 4 oxidized [2Fe-2S]-[ferredoxin] + 3 H2O. The catalysed reaction is spheroidene + 2 reduced [2Fe-2S]-[ferredoxin] + O2 + 2 H(+) = 2-hydroxyspheroidene + 2 oxidized [2Fe-2S]-[ferredoxin] + H2O. It catalyses the reaction 2-hydroxyspheroidene + 2 reduced [2Fe-2S]-[ferredoxin] + O2 + 2 H(+) = 2,2-dihydroxyspheroidene + 2 oxidized [2Fe-2S]-[ferredoxin] + H2O. It carries out the reaction 2,2-dihydroxyspheroidene = spheroiden-2-one + H2O. The enzyme catalyses spirilloxanthin + 2 reduced [2Fe-2S]-[ferredoxin] + O2 + 2 H(+) = 2-hydroxyspirilloxanthin + 2 oxidized [2Fe-2S]-[ferredoxin] + H2O. The catalysed reaction is 2-hydroxyspirilloxanthin + 2 reduced [2Fe-2S]-[ferredoxin] + O2 + 2 H(+) = 2,2-dihydroxyspirilloxanthin + 2 oxidized [2Fe-2S]-[ferredoxin] + H2O. It catalyses the reaction 2,2-dihydroxyspirilloxanthin = 2-oxospirilloxanthin + H2O. It carries out the reaction 2-oxospirilloxanthin + 2 reduced [2Fe-2S]-[ferredoxin] + O2 + 2 H(+) = 2'-hydroxy-2-oxospirilloxanthin + 2 oxidized [2Fe-2S]-[ferredoxin] + H2O. The enzyme catalyses 2'-hydroxy-2-oxospirilloxanthin + 2 reduced [2Fe-2S]-[ferredoxin] + O2 + 2 H(+) = 2',2'-dihydroxy-2-oxospirilloxanthin + 2 oxidized [2Fe-2S]-[ferredoxin] + H2O. The catalysed reaction is 2',2'-dihydroxy-2-oxospirilloxanthin = 2,2'-dioxospirilloxanthin + H2O. It functions in the pathway carotenoid biosynthesis; spheroidene biosynthesis. In terms of biological role, involved in the biosynthesis of the carotenoid spheroidene. Catalyzes the introduction of one keto group at the C-2 position of spheroidene. In vitro, can also catalyze the introduction of two keto groups at the C-2 and C-2' positions of spirilloxanthin, but spirilloxanthin biosynthesis pathway is not present in R.capsulatus. In Rhodobacter capsulatus (strain ATCC BAA-309 / NBRC 16581 / SB1003), this protein is Spheroidene monooxygenase.